The sequence spans 39 residues: Anthranilate phosphoribosyltransferase (39 aa).

It belongs to the anthranilate phosphoribosyltransferase family. Homodimer.

The enzyme catalyses N-(5-phospho-beta-D-ribosyl)anthranilate + diphosphate = 5-phospho-alpha-D-ribose 1-diphosphate + anthranilate. The protein operates within amino-acid biosynthesis; L-tryptophan biosynthesis; L-tryptophan from chorismate: step 2/5. In terms of biological role, catalyzes the transfer of the phosphoribosyl group of 5-phosphorylribose-1-pyrophosphate (PRPP) to anthranilate to yield N-(5'-phosphoribosyl)-anthranilate (PRA). The sequence is that of Anthranilate phosphoribosyltransferase (trpD) from Pectobacterium carotovorum (Erwinia carotovora).